The following is a 183-amino-acid chain: MAVQANQSASFGFRTASPSQKLSSKPIAHISLSTKLKPSSRPSLSCSTWNQGQIPARHSCINPGIFAYPPSNLTFSHELPESESPPLGKKKMRVLVKPLEKPKVVLKFVWMQKDIGVALDHMIPGFGTIPLSPYYFWPRKDAWEELKTLLESKPWISELHRVFLLNQATDIINLWQSSGGDLS.

It belongs to the chloroplast-specific ribosomal protein cS23 family. In terms of assembly, part of the 30S ribosomal subunit.

The protein localises to the plastid. It localises to the chloroplast. Functionally, component of the chloroplast ribosome (chloro-ribosome), a dedicated translation machinery responsible for the synthesis of chloroplast genome-encoded proteins, including proteins of the transcription and translation machinery and components of the photosynthetic apparatus. In Arabidopsis thaliana (Mouse-ear cress), this protein is Small ribosomal subunit protein cS23y.